Reading from the N-terminus, the 292-residue chain is 11-beta-hydroxysteroid dehydrogenase 1 (292 aa).

The Cytoplasmic portion of the chain corresponds to 2-7; that stretch reads HFMKKY. The helical; Signal-anchor for type II membrane protein transmembrane segment at 8-24 threads the bilayer; sequence LLPILVLFLAYYYYSTK. Residues 25–292 lie on the Lumenal side of the membrane; that stretch reads EEFRPEMLQG…SFTFDKLISS (268 aa). NADP(+)-binding positions include 41 to 67, 92 to 93, and 119 to 121; these read GASK…TARS, TM, and NHI. The N-linked (GlcNAc...) asparagine glycan is linked to asparagine 162. Position 170 (serine 170) interacts with substrate. Residue tyrosine 183 is the Proton acceptor of the active site. Residue 183-187 participates in NADP(+) binding; sequence YSASK. N-linked (GlcNAc...) asparagine glycosylation occurs at asparagine 207. 218 to 222 serves as a coordination point for NADP(+); that stretch reads INTET.

The protein belongs to the short-chain dehydrogenases/reductases (SDR) family. In terms of assembly, homodimer. As to expression, detected in adrenal gland, liver, kidney, testis, and at lower levels in brain and lung (at protein level).

It is found in the endoplasmic reticulum membrane. It carries out the reaction an 11beta-hydroxysteroid + NADP(+) = an 11-oxosteroid + NADPH + H(+). The enzyme catalyses corticosterone + NADP(+) = 11-dehydrocorticosterone + NADPH + H(+). It catalyses the reaction a 7beta-hydroxysteroid + NADP(+) = a 7-oxosteroid + NADPH + H(+). The catalysed reaction is 7-oxocholesterol + NADPH + H(+) = 7beta-hydroxycholesterol + NADP(+). It carries out the reaction 7-oxocholesterol + NADPH + H(+) = 7alpha-hydroxycholesterol + NADP(+). The enzyme catalyses chenodeoxycholate + NADP(+) = 7-oxolithocholate + NADPH + H(+). It catalyses the reaction 7-oxolithocholate + NADPH + H(+) = ursodeoxycholate + NADP(+). The catalysed reaction is glycochenodeoxycholate + NADP(+) = 7-oxoglycolithocholate + NADPH + H(+). It carries out the reaction taurochenodeoxycholate + NADP(+) = 7-oxotaurolithocholate + NADPH + H(+). The enzyme catalyses tauroursodeoxycholate + NADP(+) = 7-oxotaurolithocholate + NADPH + H(+). It catalyses the reaction glycoursodeoxycholate + NADP(+) = 7-oxoglycolithocholate + NADPH + H(+). The catalysed reaction is 7-oxopregnenolone + NADPH + H(+) = 7beta-hydroxypregnenolone + NADP(+). It carries out the reaction 3beta,7alpha-dihydroxyandrost-5-en-17-one + NADP(+) = 3beta-hydroxy-5-androstene-7,17-dione + NADPH + H(+). The enzyme catalyses 3beta-hydroxy-5-androstene-7,17-dione + NADPH + H(+) = 3beta,7beta-dihydroxyandrost-5-en-17-one + NADP(+). It catalyses the reaction 3beta-hydroxy-5alpha-androstane-7,17-dione + NADPH + H(+) = 3beta,7beta-dihydroxy-5alpha-androstan-17-one + NADP(+). It functions in the pathway steroid metabolism. In terms of biological role, controls the reversible conversion of biologically active glucocorticoids such as 11-dehydrocorticosterone to corticosterone in the presence of NADP(H). Participates in the corticosteroid receptor-mediated anti-inflammatory response, as well as metabolic and homeostatic processes. Bidirectional in vitro, predominantly functions as a reductase in vivo, thereby increasing the concentration of active glucocorticoids. It has broad substrate specificity, besides glucocorticoids, it accepts other steroid and sterol substrates. Interconverts 7-oxo- and 7-hydroxy-neurosteroids such as 7-oxopregnenolone and 7beta-hydroxypregnenolone, 7-oxodehydroepiandrosterone (3beta-hydroxy-5-androstene-7,17-dione) and 7beta-hydroxydehydroepiandrosterone (3beta,7beta-dihydroxyandrost-5-en-17-one), among others. Catalyzes reversibly the conversion of the major dietary oxysterol, 7-ketocholesterol (7-oxocholesterol), into the more polar 7-beta-hydroxycholesterol and 7-alpha-hhydroxycholesterol metabolites. 7-oxocholesterol is one of the most important oxysterols, it participates in several events such as induction of apoptosis, accumulation in atherosclerotic lesions, lipid peroxidation, and induction of foam cell formation. Mediates the 7-oxo reduction of 7-oxolithocholate mainly to chenodeoxycholate, and to a lesser extent to ursodeoxycholate, both in its free form and when conjugated to glycine or taurine, providing a link between glucocorticoid activation and bile acid metabolism. Catalyzes the synthesis of 7-beta-25-dihydroxycholesterol from 7-oxo-25-hydroxycholesterol in vitro, which acts as a ligand for the G-protein-coupled receptor (GPCR) Epstein-Barr virus-induced gene 2 (EBI2) and may thereby regulate immune cell migration. This is 11-beta-hydroxysteroid dehydrogenase 1 (HSD11B1) from Mesocricetus auratus (Golden hamster).